A 66-amino-acid chain; its full sequence is U1-theraphotoxin-Cg1a 2 (66 aa).

The signal sequence occupies residues 1 to 21; sequence MKTSALFVIFGLVLLFCNSFA. Residues 22–29 constitute a propeptide that is removed on maturation; that stretch reads AELEMTGR. 3 disulfide bridges follow: Cys31/Cys46, Cys38/Cys51, and Cys45/Cys58. Pro63 carries the post-translational modification Proline amide.

The protein belongs to the neurotoxin 10 (Hwtx-1) family. 46 (Jztx-7/10/12) subfamily. In terms of tissue distribution, expressed by the venom gland.

Its subcellular location is the secreted. Functionally, probable ion channel inhibitor. The polypeptide is U1-theraphotoxin-Cg1a 2 (Chilobrachys guangxiensis (Chinese earth tiger tarantula)).